The chain runs to 86 residues: Small ribosomal subunit protein bS16 (86 aa).

The protein belongs to the bacterial ribosomal protein bS16 family.

This is Small ribosomal subunit protein bS16 from Bordetella bronchiseptica (strain ATCC BAA-588 / NCTC 13252 / RB50) (Alcaligenes bronchisepticus).